We begin with the raw amino-acid sequence, 394 residues long: Cell division protein FtsZ (394 aa).

Residues 21–25, R29, 108–110, E139, R143, N166, and D187 each bind GTP; these read GGGNN and GTG. The interval 317-394 is disordered; that stretch reads DKPSSQGRKA…EERRSRRTRR (78 aa). Low complexity-rich tracts occupy residues 328 to 346 and 353 to 364; these read STGF…SGAS and SAHTSHSQSSES. The span at 365-388 shows a compositional bias: basic and acidic residues; it reads VSERSHTTKDDDIPSFIRNREERR.

Belongs to the FtsZ family. Homodimer. Polymerizes to form a dynamic ring structure in a strictly GTP-dependent manner. Interacts directly with several other division proteins.

It localises to the cytoplasm. Functionally, essential cell division protein that forms a contractile ring structure (Z ring) at the future cell division site. The regulation of the ring assembly controls the timing and the location of cell division. One of the functions of the FtsZ ring is to recruit other cell division proteins to the septum to produce a new cell wall between the dividing cells. Binds GTP and shows GTPase activity. This chain is Cell division protein FtsZ, found in Staphylococcus epidermidis (strain ATCC 35984 / DSM 28319 / BCRC 17069 / CCUG 31568 / BM 3577 / RP62A).